Reading from the N-terminus, the 159-residue chain is Cyclic pyranopterin monophosphate synthase (159 aa).

Substrate-binding positions include 75–77 (LCH) and 113–114 (ME). D128 is a catalytic residue.

Belongs to the MoaC family. As to quaternary structure, homohexamer; trimer of dimers.

The enzyme catalyses (8S)-3',8-cyclo-7,8-dihydroguanosine 5'-triphosphate = cyclic pyranopterin phosphate + diphosphate. It participates in cofactor biosynthesis; molybdopterin biosynthesis. Its function is as follows. Catalyzes the conversion of (8S)-3',8-cyclo-7,8-dihydroguanosine 5'-triphosphate to cyclic pyranopterin monophosphate (cPMP). This Cereibacter sphaeroides (strain ATCC 17029 / ATH 2.4.9) (Rhodobacter sphaeroides) protein is Cyclic pyranopterin monophosphate synthase.